The sequence spans 358 residues: CCAAT/enhancer-binding protein alpha (358 aa).

The tract at residues 1–55 (MESADFYEAEPRPPMSSHLQSPPHAPSSAAFGFPRGAGPAQPPAPPAAPEPLGGI) is disordered. Positions 1-70 (MESADFYEAE…SIDISAYIDP (70 aa)) are required to repress E2F1:TFDP1-mediated transcription, to inhibit cell cycle and to induce adipocyte differentiation. A compositionally biased stretch (low complexity) spans 29-39 (AAFGFPRGAGP). Positions 40-49 (AQPPAPPAAP) are enriched in pro residues. Residues 54–72 (GICEHETSIDISAYIDPAA) form a required for interaction with TRIB1 region. The tract at residues 128 to 204 (PPGYGCAAAG…HPPPAHLAAP (77 aa)) is required to induce adipocyte differentiation. An N6-acetyllysine; alternate modification is found at Lys-161. Lys-161 is covalently cross-linked (Glycyl lysine isopeptide (Lys-Gly) (interchain with G-Cter in SUMO2); alternate). Disordered stretches follow at residues 178–201 (LFPYQPPPPPPPSHPHPHPPPAHL) and 217–291 (TMHL…RRER). Composition is skewed to pro residues over residues 181-199 (YQPPPPPPPSHPHPHPPPA) and 224-238 (HPTPPPTPVPSPHPA). The required to functionally cooperate with SREBF1 in promoter activation stretch occupies residues 182–198 (QPPPPPPPSHPHPHPPP). Ser-190 carries the post-translational modification Phosphoserine. A phosphothreonine; by GSK3 mark is found at Thr-226 and Thr-230. Residue Ser-234 is modified to Phosphoserine; by GSK3. Over residues 239–259 (PALGAAGLPGPGSALKGLGAA) the composition is skewed to low complexity. Positions 244–358 (AGLPGPGSAL…SLVKAMGNCA (115 aa)) are interaction with FOXO1. The span at 276–291 (KSVDKNSNEYRVRRER) shows a compositional bias: basic and acidic residues. Residues 282 to 345 (SNEYRVRRER…DTLRGIFRQL (64 aa)) enclose the bZIP domain. The DNA-binding element occupies 285-300 (YRVRRERNNIAVRKSR). Residues 286–313 (RVRRERNNIAVRKSRDKAKQRNVETQQK) are basic motif. The leucine-zipper stretch occupies residues 317 to 345 (LTSDNDRLRKRVEQLSRELDTLRGIFRQL).

The protein belongs to the bZIP family. C/EBP subfamily. As to quaternary structure, binds DNA as a homodimer and as a heterodimer. Can form stable heterodimers with CEBPB, CEBPD, CEBPE and CEBPG. Interacts with PRDM16. Interacts with UBN1. Interacts with ZNF638; this interaction increases transcriptional activation. Interacts with the complex TFDP2:E2F1; the interaction prevents CEBPA binding to target gene promoters and represses its transcriptional activity. Interacts with RB1. Interacts (when phosphorylated at Ser-190) with CDK2, CDK4, E2F4 and SMARCA2. Interacts with SREBPF1. Interacts with FOXO1 (via the Fork-head domain); the interaction increases when FOXO1 is deacetylated. Interacts with SIX1. Interacts (via recognition sequence) with TRIB1. Interacts (via bZIP domain) with OVOL2 (via zinc-finger domains); the interaction inhibits the transcription factor activity of CEBPA and is required to repress adipogenesis. Interacts with TAF1A and UBTF. In terms of assembly, interacts with TAF1A and UBTF. Interacts with NPM1. As to quaternary structure, (Microbial infection) Interacts with HBV protein X. (Microbial infection) Interacts with Epstein-Barr virus lytic switch protein BZLF1; this interaction induces G1 cell cycle arrest. In terms of processing, phosphorylation at Ser-190 is required for interaction with CDK2, CDK4 and SWI/SNF complex leading to cell cycle inhibition. Dephosphorylated at Ser-190 by protein phosphatase 2A (PP2A) through PI3K/AKT signaling pathway regulation. Phosphorylation at Thr-226 and Thr-230 by GSK3 is constitutive in adipose tissue and lung. In liver, both Thr-226 and Thr-230 are phosphorylated only during feeding but not during fasting. Phosphorylation of the GSK3 consensus sites selectively decreases transactivation activity on IRE-controlled promoters. Post-translationally, sumoylated, sumoylation blocks the inhibitory effect on cell proliferation by disrupting the interaction with SMARCA2. Ubiquitinated by COP1 upon interaction with TRIB1.

Its subcellular location is the nucleus. The protein resides in the nucleolus. Its function is as follows. Transcription factor that coordinates proliferation arrest and the differentiation of myeloid progenitors, adipocytes, hepatocytes, and cells of the lung and the placenta. Binds directly to the consensus DNA sequence 5'-T[TG]NNGNAA[TG]-3' acting as an activator on distinct target genes. During early embryogenesis, plays essential and redundant functions with CEBPB. Essential for the transition from common myeloid progenitors (CMP) to granulocyte/monocyte progenitors (GMP). Critical for the proper development of the liver and the lung. Necessary for terminal adipocyte differentiation, is required for postnatal maintenance of systemic energy homeostasis and lipid storage. To regulate these different processes at the proper moment and tissue, interplays with other transcription factors and modulators. Down-regulates the expression of genes that maintain cells in an undifferentiated and proliferative state through E2F1 repression, which is critical for its ability to induce adipocyte and granulocyte terminal differentiation. Reciprocally E2F1 blocks adipocyte differentiation by binding to specific promoters and repressing CEBPA binding to its target gene promoters. Proliferation arrest also depends on a functional binding to SWI/SNF complex. In liver, regulates gluconeogenesis and lipogenesis through different mechanisms. To regulate gluconeogenesis, functionally cooperates with FOXO1 binding to IRE-controlled promoters and regulating the expression of target genes such as PCK1 or G6PC1. To modulate lipogenesis, interacts and transcriptionally synergizes with SREBF1 in promoter activation of specific lipogenic target genes such as ACAS2. In adipose tissue, seems to act as FOXO1 coactivator accessing to ADIPOQ promoter through FOXO1 binding sites. In terms of biological role, can act as dominant-negative. Binds DNA and have transctivation activity, even if much less efficiently than isoform 2. Does not inhibit cell proliferation. Directly and specifically enhances ribosomal DNA transcription interacting with RNA polymerase I-specific cofactors and inducing histone acetylation. This Homo sapiens (Human) protein is CCAAT/enhancer-binding protein alpha.